An 821-amino-acid chain; its full sequence is Protein SCAR1 (821 aa).

Disordered stretches follow at residues 168 to 189, 205 to 289, and 577 to 625; these read KRAS…QRGR, TCTS…RGSS, and TSLP…RESK. Polar residues predominate over residues 206–225; that stretch reads CTSLSFSGRTSTSKTASTIE. Basic and acidic residues predominate over residues 226-250; it reads IESKSDLQEHRSFSFDSRSGGEKPK. A compositionally biased stretch (polar residues) spans 252–265; it reads VSSSSRFTPGSRTI. The span at 592–612 shows a compositional bias: low complexity; the sequence is SSSYISDNSDNDNRSVSMSEQ. Residues 756-774 form the WH2 domain; sequence EAGDFLHQIRTKQFNLRRV. Positions 802-821 are disordered; it reads QAVASDDGEGESDTWSDSDT. A compositionally biased stretch (acidic residues) spans 807-821; that stretch reads DDGEGESDTWSDSDT.

Belongs to the SCAR/WAVE family. In terms of assembly, binds BRK1 and actin. Interacts with SPK1, ABI1 and ABI2. As to expression, expressed in expanding cotyledons, expanding leaves and expanding siliques containing developing embryos. Detected in unopened flower buds and in the expanding tip region of roots. Reduced expression in mature leaves and mature cotyledons.

Its subcellular location is the cytoplasm. It localises to the cytoskeleton. Involved in regulation of actin and microtubule organization. Part of a WAVE complex that activates the Arp2/3 complex. Regulates trichome branch positioning and expansion. The protein is Protein SCAR1 (SCAR1) of Arabidopsis thaliana (Mouse-ear cress).